A 376-amino-acid chain; its full sequence is 23S rRNA (uracil(747)-C(5))-methyltransferase RlmC (376 aa).

[4Fe-4S] cluster is bound by residues Cys3, Cys11, Cys14, and Cys87. S-adenosyl-L-methionine is bound by residues Gln212, Phe241, Glu262, and Asn307. The active-site Nucleophile is Cys334.

The protein belongs to the class I-like SAM-binding methyltransferase superfamily. RNA M5U methyltransferase family. RlmC subfamily.

It carries out the reaction uridine(747) in 23S rRNA + S-adenosyl-L-methionine = 5-methyluridine(747) in 23S rRNA + S-adenosyl-L-homocysteine + H(+). Functionally, catalyzes the formation of 5-methyl-uridine at position 747 (m5U747) in 23S rRNA. The chain is 23S rRNA (uracil(747)-C(5))-methyltransferase RlmC from Pectobacterium carotovorum subsp. carotovorum (strain PC1).